Reading from the N-terminus, the 407-residue chain is Deacetylase Atu3266 (407 aa).

Positions 75, 77, 173, 206, 229, and 289 each coordinate Zn(2+). Residue Lys173 is modified to N6-carboxylysine.

This sequence belongs to the metallo-dependent hydrolases superfamily. Atu3266/EF_0837 deacetylase family. In terms of assembly, homohexamer, dimer of trimers. Requires Zn(2+) as cofactor.

Esterase that catalyzes the deacetylation of acetyl-(R)-mandelate (in vitro). Can also hydrolyze acetyl glycolate, but with lower efficiency. Has very low N-acetyl-D-amino acid deacetylase activity with N-acetyl-D-serine and N-acetyl-D-threonine (in vitro). Theoretical substrate docking studies suggest that other N-acetylated amino acids may optimally occupy the active site and may in fact be the physiological substrates. This chain is Deacetylase Atu3266, found in Agrobacterium fabrum (strain C58 / ATCC 33970) (Agrobacterium tumefaciens (strain C58)).